The chain runs to 115 residues: Phosphoribosyl-ATP pyrophosphatase (115 aa).

Belongs to the PRA-PH family.

It is found in the cytoplasm. It carries out the reaction 1-(5-phospho-beta-D-ribosyl)-ATP + H2O = 1-(5-phospho-beta-D-ribosyl)-5'-AMP + diphosphate + H(+). It participates in amino-acid biosynthesis; L-histidine biosynthesis; L-histidine from 5-phospho-alpha-D-ribose 1-diphosphate: step 2/9. The polypeptide is Phosphoribosyl-ATP pyrophosphatase (Saccharophagus degradans (strain 2-40 / ATCC 43961 / DSM 17024)).